The chain runs to 136 residues: MIRIGMVVAEFNYDITMMMLERARSYAEFLGVEVHKILRVPGSFDMPLAIKKLLMDNDIDGVVTIGAVIKGETDHHKIIMDNVSRKITDLSLEYNKPVALGISGPGESRLQAEARIDMAKEAVESCVKMIKLLKSN.

Residues phenylalanine 11, 43-45, and 67-69 contribute to the 5-amino-6-(D-ribitylamino)uracil site; these read SFD and AVI. Residue 72–73 participates in (2S)-2-hydroxy-3-oxobutyl phosphate binding; that stretch reads ET. Histidine 75 acts as the Proton donor in catalysis. Position 100 (leucine 100) interacts with 5-amino-6-(D-ribitylamino)uracil. Arginine 115 contacts (2S)-2-hydroxy-3-oxobutyl phosphate.

This sequence belongs to the DMRL synthase family.

It carries out the reaction (2S)-2-hydroxy-3-oxobutyl phosphate + 5-amino-6-(D-ribitylamino)uracil = 6,7-dimethyl-8-(1-D-ribityl)lumazine + phosphate + 2 H2O + H(+). Its pathway is cofactor biosynthesis; riboflavin biosynthesis; riboflavin from 2-hydroxy-3-oxobutyl phosphate and 5-amino-6-(D-ribitylamino)uracil: step 1/2. In terms of biological role, catalyzes the formation of 6,7-dimethyl-8-ribityllumazine by condensation of 5-amino-6-(D-ribitylamino)uracil with 3,4-dihydroxy-2-butanone 4-phosphate. This is the penultimate step in the biosynthesis of riboflavin. This is 6,7-dimethyl-8-ribityllumazine synthase from Picrophilus torridus (strain ATCC 700027 / DSM 9790 / JCM 10055 / NBRC 100828 / KAW 2/3).